A 302-amino-acid polypeptide reads, in one-letter code: RING-H2 finger protein ATL38 (302 aa).

The helical transmembrane segment at 15 to 35 (LLVITIILFAIFIVGLASVCF) threads the bilayer. The RING-type; atypical zinc-finger motif lies at 96–138 (CAVCICEFEDHETLRLMPECCHVFHADCVSVWLSDHSTCPLCR). Positions 279–302 (GEAVAPSKDSRRISVEQSQLDDRV) are disordered. The span at 286-302 (KDSRRISVEQSQLDDRV) shows a compositional bias: basic and acidic residues.

Belongs to the RING-type zinc finger family. ATL subfamily.

It is found in the membrane. The catalysed reaction is S-ubiquitinyl-[E2 ubiquitin-conjugating enzyme]-L-cysteine + [acceptor protein]-L-lysine = [E2 ubiquitin-conjugating enzyme]-L-cysteine + N(6)-ubiquitinyl-[acceptor protein]-L-lysine.. It participates in protein modification; protein ubiquitination. The protein is RING-H2 finger protein ATL38 (ATL38) of Arabidopsis thaliana (Mouse-ear cress).